Consider the following 205-residue polypeptide: Coatomer subunit zeta-2 (205 aa).

The segment covering 1-12 (MQRPEAWPRPHP) has biased composition (basic and acidic residues). A disordered region spans residues 1–33 (MQRPEAWPRPHPGEGASAAQAGGAAPPTRATEQ). The segment covering 13–30 (GEGASAAQAGGAAPPTRA) has biased composition (low complexity).

Belongs to the adaptor complexes small subunit family. In terms of assembly, oligomeric complex.

It is found in the cytoplasm. Its subcellular location is the cytosol. It localises to the endoplasmic reticulum-Golgi intermediate compartment membrane. The protein localises to the golgi apparatus membrane. The protein resides in the cytoplasmic vesicle. It is found in the COPI-coated vesicle membrane. The coatomer is a cytosolic protein complex that binds to dilysine motifs and reversibly associates with Golgi non-clathrin-coated vesicles, which further mediate biosynthetic protein transport from the ER, via the Golgi up to the trans Golgi network. Coatomer complex is required for budding from Golgi membranes, and is essential for the retrograde Golgi-to-ER transport of dilysine-tagged proteins. The zeta subunit may be involved in regulating the coat assembly and, hence, the rate of biosynthetic protein transport due to its association-dissociation properties with the coatomer complex. The sequence is that of Coatomer subunit zeta-2 (Copz2) from Mus musculus (Mouse).